A 423-amino-acid polypeptide reads, in one-letter code: MLRVRCLRGGSRGAEALHYIGSRLGRTVTGWVQRTFQSTQAATASSGNSCAADDKATDPLPKDCPVSSYNEWDPLEEVIVGRAENACVPPFTVEVKANTYEKYWPFYQKYGGHYFPKDHLKKAVAEIEEMCNILKMEGVTVRRPDPIDWSVKYKTPDFESTGLYGAMPRDILIVVGNEIIEAPMAWRARFFEYRAYRSIIKDYFRRGAKWTTAPKPTMADELYDQDYPIYSVEDRHKLAAQGKFVTTEFEPCFDAADFIRAGRDIFAQRSQVTNYMGIEWMRKHLAPDYRVHIISFKDPNPMHIDATFNIIGPGLVLSNPDRPCHQIDLFKKAGWTIVTPPIPVIPDDHPLWMSSKWLSMNVLMLDEKRVMVDANEVPIQKMFEKLGISTIKISIRNANSLGGGFHCWTCDVRRRGTLQSYFD.

The N-terminal 43 residues, 1-43, are a transit peptide targeting the mitochondrion; that stretch reads MLRVRCLRGGSRGAEALHYIGSRLGRTVTGWVQRTFQSTQAAT. 2 positions are modified to phosphoserine: Ser46 and Ser49. Residue Asp170 participates in arginine binding. Catalysis depends on residues Asp254 and His303. The arginine site is built by Asp305, Arg322, Ser354, and Ser355. Lys385 carries the N6-acetyllysine modification. Catalysis depends on Cys407, which acts as the Amidino-cysteine intermediate.

Belongs to the amidinotransferase family. As to quaternary structure, homodimer. Kidney. Expressed biallelically in placenta.

Its subcellular location is the mitochondrion inner membrane. It carries out the reaction L-arginine + glycine = guanidinoacetate + L-ornithine. It catalyses the reaction 4-aminobutanoate + L-arginine = 4-guanidinobutanoate + L-ornithine. The catalysed reaction is beta-alanine + L-arginine = 3-guanidinopropanoate + L-ornithine. The enzyme catalyses taurine + L-arginine = taurocyamine + L-ornithine. It functions in the pathway amine and polyamine biosynthesis; creatine biosynthesis; creatine from L-arginine and glycine: step 1/2. Its function is as follows. Transamidinase that catalyzes the transfer of the amidino group of L-arginine onto the amino moiety of acceptor metabolites such as glycine, beta-alanine, gamma-aminobutyric acid (GABA) and taurine yielding the corresponding guanidine derivatives. Catalyzes the rate-limiting step of creatine biosynthesis, namely the transfer of the amidino group from L-arginine to glycine to generate guanidinoacetate, which is then methylated by GAMT to form creatine. Provides creatine as a source for ATP generation in tissues with high energy demands, in particular skeletal muscle, heart and brain. The sequence is that of Glycine amidinotransferase, mitochondrial (GATM) from Sus scrofa (Pig).